The sequence spans 419 residues: UDP-N-acetylmuramoylalanine--D-glutamate ligase (419 aa).

Residue 109-115 (GSAGKTT) coordinates ATP.

Belongs to the MurCDEF family.

It is found in the cytoplasm. The enzyme catalyses UDP-N-acetyl-alpha-D-muramoyl-L-alanine + D-glutamate + ATP = UDP-N-acetyl-alpha-D-muramoyl-L-alanyl-D-glutamate + ADP + phosphate + H(+). The protein operates within cell wall biogenesis; peptidoglycan biosynthesis. In terms of biological role, cell wall formation. Catalyzes the addition of glutamate to the nucleotide precursor UDP-N-acetylmuramoyl-L-alanine (UMA). The protein is UDP-N-acetylmuramoylalanine--D-glutamate ligase of Chlamydia caviae (strain ATCC VR-813 / DSM 19441 / 03DC25 / GPIC) (Chlamydophila caviae).